We begin with the raw amino-acid sequence, 351 residues long: GDP-mannose 4,6-dehydratase (351 aa).

NADP(+) is bound by residues 11 to 16 (GVTGQD), 66 to 67 (DM), 88 to 92 (LAAQS), and Tyr-103. The active site involves Thr-135. Residues Glu-137 and Tyr-159 each act as nucleophile in the active site. Residues Lys-163, His-189, and Arg-194 each coordinate NADP(+).

The protein belongs to the NAD(P)-dependent epimerase/dehydratase family. GDP-mannose 4,6-dehydratase subfamily. The cofactor is NADP(+).

It carries out the reaction GDP-alpha-D-mannose = GDP-4-dehydro-alpha-D-rhamnose + H2O. The protein operates within nucleotide-sugar biosynthesis; GDP-L-fucose biosynthesis via de novo pathway; GDP-L-fucose from GDP-alpha-D-mannose: step 1/2. In terms of biological role, catalyzes the conversion of GDP-D-mannose to GDP-4-dehydro-6-deoxy-D-mannose. The chain is GDP-mannose 4,6-dehydratase from Sinorhizobium fredii (strain HH103).